Here is a 67-residue protein sequence, read N- to C-terminus: Sec-independent protein translocase protein TatA (67 aa).

Residues 1–21 (MGSFSLTHWIIVLIIVVLIFG) traverse the membrane as a helical segment. Residues 43–67 (LNEGTDGKEAQKDDVIEHKKDEDKA) form a disordered region. Residues 47-67 (TDGKEAQKDDVIEHKKDEDKA) are compositionally biased toward basic and acidic residues.

The protein belongs to the TatA/E family. In terms of assembly, the Tat system comprises two distinct complexes: a TatABC complex, containing multiple copies of TatA, TatB and TatC subunits, and a separate TatA complex, containing only TatA subunits. Substrates initially bind to the TatABC complex, which probably triggers association of the separate TatA complex to form the active translocon.

The protein localises to the cell inner membrane. Functionally, part of the twin-arginine translocation (Tat) system that transports large folded proteins containing a characteristic twin-arginine motif in their signal peptide across membranes. TatA could form the protein-conducting channel of the Tat system. This Neisseria gonorrhoeae (strain ATCC 700825 / FA 1090) protein is Sec-independent protein translocase protein TatA.